Here is a 652-residue protein sequence, read N- to C-terminus: Interferon-induced GTP-binding protein Mx1 (652 aa).

Positions 1–27 (MKERTSACRHGTPQKHPDTSEESQAME) are disordered. The 274-residue stretch at 58–331 (DLALPAIAVI…LTSHICKSLP (274 aa)) folds into the Dynamin-type G domain. A G1 motif region spans residues 68 to 75 (GDQSSGKS). 68-75 (GDQSSGKS) provides a ligand contact to GTP. The tract at residues 93–95 (VTR) is G2 motif. The G3 motif stretch occupies residues 169–172 (DLPG). Residues 169 to 173 (DLPGI) and 238 to 241 (TKPD) contribute to the GTP site. Residues 238–241 (TKPD) are G4 motif. The tract at residues 270–273 (KCRG) is G5 motif. Positions 332–357 (ILENQINVNHQIASEELQKYGADIPE) are bundle signaling element (BSE). Residues 357–526 (EDDSKRLSFL…HFQMEHIVYC (170 aa)) are middle domain. Positions 358–622 (DDSKRLSFLM…TSKCNWFLTE (265 aa)) are stalk. Positions 564–652 (TTEMTQHLNA…AQRKLAKFSN (89 aa)) constitute a GED domain.

Belongs to the TRAFAC class dynamin-like GTPase superfamily. Dynamin/Fzo/YdjA family. In terms of assembly, homooligomer. Oligomerizes into multimeric filamentous or ring-like structures by virtue of its stalk domain. Oligomerization is critical for GTPase activity, protein stability, and recognition of viral target structures. Interacts with TRPC1, TRPC3, TRPC4, TRPC5, TRPC6 and TRPC7. Interacts with HSPA5. Interacts with TUBB/TUBB5. Interacts with DDX39A and DDX39B. Post-translationally, ISGylated.

It is found in the nucleus. The protein resides in the cytoplasm. Its subcellular location is the endoplasmic reticulum membrane. It localises to the perinuclear region. In terms of biological role, interferon-induced dynamin-like GTPase which has antiviral activity against influenza A virus, (IAV) and Thogoto virus (THOV). Inhibits IAV by interfering with the process of primary transcription, probably by affecting the viral polymerase function. In Rattus norvegicus (Rat), this protein is Interferon-induced GTP-binding protein Mx1 (Mx1).